Consider the following 228-residue polypeptide: Max-interacting protein 1 (228 aa).

Disordered regions lie at residues 29 to 76 (GYAS…NELE) and 162 to 228 (GSTI…SFTS). Basic residues predominate over residues 43-56 (QHSKPPRRLSRAQK). Residues 57–70 (HSSGSSNTSTANRS) are compositionally biased toward polar residues. In terms of domain architecture, bHLH spans 67 to 119 (ANRSTHNELEKNRRAHLRLCLERLKVLIPLGPDCTRHTTLGLLNKAKAHIKKL). Residues 173-183 (EREEIEVDVES) show a composition bias toward acidic residues. A compositionally biased stretch (polar residues) spans 216 to 228 (GYSSASVKLSFTS).

In terms of assembly, efficient DNA binding requires dimerization with another bHLH protein. Binds DNA as a heterodimer with MAX. Interacts with SMC3. Interacts with RNF17.

It localises to the nucleus. Transcriptional repressor. MXI1 binds with MAX to form a sequence-specific DNA-binding protein complex which recognizes the core sequence 5'-CAC[GA]TG-3'. MXI1 thus antagonizes MYC transcriptional activity by competing for MAX. This chain is Max-interacting protein 1 (Mxi1), found in Rattus norvegicus (Rat).